The sequence spans 228 residues: Ribose-5-phosphate isomerase A (228 aa).

Substrate is bound by residues 27 to 30, 86 to 89, and 100 to 103; these read TGTT, DGAD, and KGMG. E109 acts as the Proton acceptor in catalysis. Substrate is bound at residue K127.

It belongs to the ribose 5-phosphate isomerase family. Homodimer.

The enzyme catalyses aldehydo-D-ribose 5-phosphate = D-ribulose 5-phosphate. The protein operates within carbohydrate degradation; pentose phosphate pathway; D-ribose 5-phosphate from D-ribulose 5-phosphate (non-oxidative stage): step 1/1. Functionally, catalyzes the reversible conversion of ribose-5-phosphate to ribulose 5-phosphate. This Borreliella afzelii (strain PKo) (Borrelia afzelii) protein is Ribose-5-phosphate isomerase A.